We begin with the raw amino-acid sequence, 256 residues long: D-aminoacyl-tRNA deacylase (256 aa).

The protein belongs to the DtdA deacylase family. Monomer. Zn(2+) is required as a cofactor.

The catalysed reaction is a D-aminoacyl-tRNA + H2O = a tRNA + a D-alpha-amino acid + H(+). It catalyses the reaction glycyl-tRNA(Ala) + H2O = tRNA(Ala) + glycine + H(+). Its function is as follows. D-aminoacyl-tRNA deacylase with broad substrate specificity. By recycling D-aminoacyl-tRNA to D-amino acids and free tRNA molecules, this enzyme counteracts the toxicity associated with the formation of D-aminoacyl-tRNA entities in vivo. This Thermoplasma acidophilum (strain ATCC 25905 / DSM 1728 / JCM 9062 / NBRC 15155 / AMRC-C165) protein is D-aminoacyl-tRNA deacylase.